The chain runs to 29 residues: Kalata-B4 (29 aa).

The segment at residues 1–29 (GLPVCGETCVGGTCNTPGCTCSWPVCTRD) is a cross-link (cyclopeptide (Gly-Asp)). Disulfide bonds link C5–C19, C9–C21, and C14–C26.

Post-translationally, this is a cyclic peptide.

Probably participates in a plant defense mechanism. This chain is Kalata-B4, found in Oldenlandia affinis.